A 389-amino-acid chain; its full sequence is Phosphoglycerate kinase (389 aa).

Residues 19-21 (DYN), arginine 34, 57-60 (HLGR), arginine 117, and arginine 150 contribute to the substrate site. ATP-binding positions include lysine 200, glycine 288, glutamate 319, and 347 to 350 (GGDS).

Belongs to the phosphoglycerate kinase family. Monomer.

Its subcellular location is the cytoplasm. It catalyses the reaction (2R)-3-phosphoglycerate + ATP = (2R)-3-phospho-glyceroyl phosphate + ADP. It participates in carbohydrate degradation; glycolysis; pyruvate from D-glyceraldehyde 3-phosphate: step 2/5. This chain is Phosphoglycerate kinase, found in Deinococcus geothermalis (strain DSM 11300 / CIP 105573 / AG-3a).